Consider the following 368-residue polypeptide: Quinolinate synthase (368 aa).

2 residues coordinate iminosuccinate: His46 and Ser63. Residue Cys110 coordinates [4Fe-4S] cluster. Iminosuccinate contacts are provided by residues 141-143 (YVN) and Ser162. Cys230 is a [4Fe-4S] cluster binding site. Residues 256-258 (HPE) and Thr273 contribute to the iminosuccinate site. [4Fe-4S] cluster is bound at residue Cys320.

It belongs to the quinolinate synthase family. Type 3 subfamily. [4Fe-4S] cluster is required as a cofactor.

It is found in the cytoplasm. The catalysed reaction is iminosuccinate + dihydroxyacetone phosphate = quinolinate + phosphate + 2 H2O + H(+). Its pathway is cofactor biosynthesis; NAD(+) biosynthesis; quinolinate from iminoaspartate: step 1/1. Catalyzes the condensation of iminoaspartate with dihydroxyacetone phosphate to form quinolinate. The sequence is that of Quinolinate synthase from Bacillus thuringiensis (strain Al Hakam).